The following is a 499-amino-acid chain: Glycerol kinase (499 aa).

ADP is bound at residue threonine 13. The ATP site is built by threonine 13, threonine 14, and serine 15. Threonine 13 lines the sn-glycerol 3-phosphate pocket. Arginine 17 is an ADP binding site. Residues arginine 83, glutamate 84, tyrosine 135, and aspartate 245 each contribute to the sn-glycerol 3-phosphate site. Glycerol is bound by residues arginine 83, glutamate 84, tyrosine 135, aspartate 245, and glutamine 246. ADP is bound by residues threonine 267 and glycine 310. The ATP site is built by threonine 267, glycine 310, glutamine 314, and alanine 411. ADP contacts are provided by alanine 411 and asparagine 415.

It belongs to the FGGY kinase family.

It catalyses the reaction glycerol + ATP = sn-glycerol 3-phosphate + ADP + H(+). It participates in polyol metabolism; glycerol degradation via glycerol kinase pathway; sn-glycerol 3-phosphate from glycerol: step 1/1. Inhibited by fructose 1,6-bisphosphate (FBP). Its function is as follows. Key enzyme in the regulation of glycerol uptake and metabolism. Catalyzes the phosphorylation of glycerol to yield sn-glycerol 3-phosphate. This Xylella fastidiosa (strain M23) protein is Glycerol kinase.